Reading from the N-terminus, the 272-residue chain is HTH-type transcriptional repressor AllR (272 aa).

The interval 1 to 20 (MTEVRRRGRPGQAEPTAQKG) is disordered. Residues 21-83 (AQALERGIAI…SQLGWWHIGL (63 aa)) form the HTH iclR-type domain. The H-T-H motif DNA-binding region spans 43 to 62 (VSDISGSLDLPLSTTFRLLK). The IclR-ED domain maps to 98-267 (VLSVAGPFMH…AKDISTALGL (170 aa)). Residues 154–156 (SGA), Asp207, Cys217, and 234–236 (SIS) contribute to the glyoxylate site.

In terms of biological role, negative regulator of allantoin and glyoxylate utilization operons. Binds to the gcl promoter and to the allS-allA intergenic region. The sequence is that of HTH-type transcriptional repressor AllR (allR) from Salmonella paratyphi A (strain ATCC 9150 / SARB42).